Reading from the N-terminus, the 335-residue chain is MFLTILAGLIAFAVTALAMPHFIRLYQLKKIGGQQMHEDVKQHLAKAGTPTMGGTVFLLVATSLSFVFALVYFRDGQSLGLISGILLIVLIYGIIGFLDDFLKIFKQVNEGLTAKQKFTFQIVGGLVFYVIHVMPSGIDAINVFGYHWHLGFLYLCFVLFWVVGFSNAVNLTDGIDGLASVSVVISLLAYGVIAYAQGQFDVLLLIGIMVGALLAFFLFNHKPAKIFMGDVGSLALGAMLAAISIALRQEWTLLVIGIVYVLETSSVMLQVTYFKYTKKKYGEGRRIFRMTPFHHHLELGGLSGKAAKWSEWKVDAFLWALGLVASLIVLAILYL.

The next 10 helical transmembrane spans lie at 3-23 (LTILAGLIAFAVTALAMPHFI), 53-73 (GGTVFLLVATSLSFVFALVYF), 78-98 (SLGLISGILLIVLIYGIIGFL), 118-138 (FTFQIVGGLVFYVIHVMPSGI), 143-163 (VFGYHWHLGFLYLCFVLFWVV), 174-194 (GIDGLASVSVVISLLAYGVIA), 200-220 (FDVLLLIGIMVGALLAFFLFN), 226-246 (IFMGDVGSLALGAMLAAISIA), 251-271 (WTLLVIGIVYVLETSSVMLQV), and 314-334 (VDAFLWALGLVASLIVLAILY).

Belongs to the glycosyltransferase 4 family. MraY subfamily. Requires Mg(2+) as cofactor.

The protein resides in the cell membrane. The enzyme catalyses UDP-N-acetyl-alpha-D-muramoyl-L-alanyl-gamma-D-glutamyl-L-lysyl-D-alanyl-D-alanine + di-trans,octa-cis-undecaprenyl phosphate = Mur2Ac(oyl-L-Ala-gamma-D-Glu-L-Lys-D-Ala-D-Ala)-di-trans,octa-cis-undecaprenyl diphosphate + UMP. It functions in the pathway cell wall biogenesis; peptidoglycan biosynthesis. Its function is as follows. Catalyzes the initial step of the lipid cycle reactions in the biosynthesis of the cell wall peptidoglycan: transfers peptidoglycan precursor phospho-MurNAc-pentapeptide from UDP-MurNAc-pentapeptide onto the lipid carrier undecaprenyl phosphate, yielding undecaprenyl-pyrophosphoryl-MurNAc-pentapeptide, known as lipid I. The polypeptide is Phospho-N-acetylmuramoyl-pentapeptide-transferase (Streptococcus equi subsp. equi (strain 4047)).